Here is a 130-residue protein sequence, read N- to C-terminus: Small ribosomal subunit protein uS11c (130 aa).

Belongs to the universal ribosomal protein uS11 family. Part of the 30S ribosomal subunit.

It localises to the plastid. The protein localises to the chloroplast. This is Small ribosomal subunit protein uS11c from Pinus koraiensis (Korean pine).